The chain runs to 346 residues: Deoxyhypusine hydroxylase (346 aa).

HEAT-like PBS-type repeat units follow at residues 71-100, 104-133, 213-242, 246-275, and 279-320; these read VLLRHEVAYVIGQISNEKCNDILIKLLNDT, LMVRHEAAEGLAAIGSDSNIEVIKKFLNDE, LKLRYEALFKLRDMETDVSINALGEVLIKD, AIFRHEVAFVLGQALHLNSLKYLISSLQNV, and EMVR…SKDA. Residues H75, H108, and E109 each coordinate Fe cation. The Fe cation site is built by H250, H283, and E284.

This sequence belongs to the deoxyhypusine hydroxylase family. Requires Fe(2+) as cofactor.

The catalysed reaction is [eIF5A protein]-deoxyhypusine + AH2 + O2 = [eIF5A protein]-hypusine + A + H2O. It functions in the pathway protein modification; eIF5A hypusination. Its function is as follows. Catalyzes the hydroxylation of the N(6)-(4-aminobutyl)-L-lysine intermediate produced by deoxyhypusine synthase/DHPS on a critical lysine of the eukaryotic translation initiation factor 5A/eIF-5A. This is the second step of the post-translational modification of that lysine into an unusual amino acid residue named hypusine. Hypusination is unique to mature eIF-5A factor and is essential for its function. This chain is Deoxyhypusine hydroxylase, found in Plasmodium vivax (strain Salvador I).